The primary structure comprises 181 residues: ATP-dependent protease subunit HslV (181 aa).

The active site involves Thr11. The Na(+) site is built by Ala166, Cys169, and Thr172.

Belongs to the peptidase T1B family. HslV subfamily. A double ring-shaped homohexamer of HslV is capped on each side by a ring-shaped HslU homohexamer. The assembly of the HslU/HslV complex is dependent on binding of ATP.

Its subcellular location is the cytoplasm. It carries out the reaction ATP-dependent cleavage of peptide bonds with broad specificity.. With respect to regulation, allosterically activated by HslU binding. Its function is as follows. Protease subunit of a proteasome-like degradation complex believed to be a general protein degrading machinery. The chain is ATP-dependent protease subunit HslV from Chlorobaculum parvum (strain DSM 263 / NCIMB 8327) (Chlorobium vibrioforme subsp. thiosulfatophilum).